A 557-amino-acid chain; its full sequence is MPERDSEPFSNPLAPDGHDVDDPHSFHQSKLTNEDFRKLLMTPRAAPTSAPPSKSRHHEMPREYNEDEDPAARRRKKKSYYAKLRQQEIERERELAEKYRDRAKERRDGVNKDYEETELISTTANYRAVGPTAEADKSAAEKRRQLIQESKFLGGDMEHTHLVKGLDFALLQKVRAEIASKEKEEEELMEKPQKETKKDEDPENKIEFKTRLGRNVYRMLFKSKSYERNELFLPGRMAYVVDLDDEYADTDIPTTLIRSKADCPTMEAQTTLTTNDIVISKLTQILSYLRQGTRNKKLKKKDKGKLEEKKPPEADMNIFEDIGDYVPSTTKTPRDKERERYRERERDRERDRDRERDRERDRERERERDREREREEEKKRHSYFEKPKVDDEPMDVDKGPGSAKELIKSINEKFAGSAGWEGTESLKKPEDKKQLGDFFGMSNSYAECYPATMDDMAVDSDEEVDYSKMDQGNKKGPLGRWDFDTQEEYSEYMNNKEALPKAAFQYGIKMSEGRKTRRFKETNDKAELDRQWKKISAIIEKRKKMEADGVEVKRPKY.

A disordered region spans residues 1–90; that stretch reads MPERDSEPFS…YAKLRQQEIE (90 aa). Positions 16–25 are enriched in basic and acidic residues; sequence DGHDVDDPHS. The segment covering 42–53 has biased composition (low complexity); that stretch reads TPRAAPTSAPPS. N6-acetyllysine is present on residues K98 and K137. Residue K151 forms a Glycyl lysine isopeptide (Lys-Gly) (interchain with G-Cter in SUMO2) linkage. The tract at residues 181–205 is disordered; that stretch reads KEKEEEELMEKPQKETKKDEDPENK. S287 is modified (phosphoserine). Basic residues predominate over residues 294 to 303; it reads RNKKLKKKDK. The disordered stretch occupies residues 294 to 402; that stretch reads RNKKLKKKDK…PMDVDKGPGS (109 aa). The segment covering 304–313 has biased composition (basic and acidic residues); the sequence is GKLEEKKPPE. Residues K310 and K331 each participate in a glycyl lysine isopeptide (Lys-Gly) (interchain with G-Cter in SUMO2) cross-link. The span at 332-398 shows a compositional bias: basic and acidic residues; it reads TPRDKERERY…VDDEPMDVDK (67 aa). 17 consecutive repeat copies span residues 342–343, 344–345, 346–347, 348–349, 350–351, 352–353, 354–355, 356–357, 358–359, 360–361, 362–363, 364–365, 366–367, 368–369, 370–371, 372–373, and 374–375. The tract at residues 342 to 375 is 17 X 2 AA tandem repeats of R-[ED]; it reads RERERDRERDRDRERDRERDRERERERDRERERE. Residues K386, K388, K404, and K408 each participate in a glycyl lysine isopeptide (Lys-Gly) (interchain with G-Cter in SUMO2) cross-link. 2 positions are modified to phosphoserine: S417 and S460. T485 bears the Phosphothreonine mark. Residues K496, K501, and K509 each participate in a glycyl lysine isopeptide (Lys-Gly) (interchain with G-Cter in SUMO2) cross-link. Residue S536 is modified to Phosphoserine. Glycyl lysine isopeptide (Lys-Gly) (interchain with G-Cter in SUMO2) cross-links involve residues K541, K543, K544, and K553.

It belongs to the RED family. As to quaternary structure, component of the spliceosome B complex. Interacts with SMU1. Interacts with MAD1L1. May interact with DHX15.

It is found in the nucleus. Its subcellular location is the nucleoplasm. It localises to the chromosome. The protein resides in the cytoplasm. The protein localises to the cytoskeleton. It is found in the spindle pole. Functionally, involved in pre-mRNA splicing as a component of the spliceosome. Auxiliary spliceosomal protein that regulates selection of alternative splice sites in a small set of target pre-mRNA species. Required for normal mitotic cell cycle progression. Recruits MAD1L1 and MAD2L1 to kinetochores, and is required to trigger the spindle assembly checkpoint. Required for normal accumulation of SMU1. The sequence is that of Protein Red (Ik) from Rattus norvegicus (Rat).